The primary structure comprises 247 residues: tRNA pseudouridine synthase A (247 aa).

Residue D52 is the Nucleophile of the active site. Residue Y110 participates in substrate binding.

The protein belongs to the tRNA pseudouridine synthase TruA family. In terms of assembly, homodimer.

The enzyme catalyses uridine(38/39/40) in tRNA = pseudouridine(38/39/40) in tRNA. Functionally, formation of pseudouridine at positions 38, 39 and 40 in the anticodon stem and loop of transfer RNAs. The protein is tRNA pseudouridine synthase A of Geobacter sp. (strain M21).